The primary structure comprises 38 residues: Odorant-binding protein 2 (38 aa).

Belongs to the calycin superfamily. Lipocalin family. Nasal mucosa.

It is found in the secreted. Its subcellular location is the extracellular space. In terms of biological role, this soluble protein may play a specific role in odor discrimination and perception. In Hystrix cristata (North African crested porcupine), this protein is Odorant-binding protein 2.